A 101-amino-acid chain; its full sequence is Chaperone modulatory protein CbpM (101 aa).

This sequence belongs to the CbpM family.

Interacts with CbpA and inhibits both the DnaJ-like co-chaperone activity and the DNA binding activity of CbpA. Together with CbpA, modulates the activity of the DnaK chaperone system. Does not inhibit the co-chaperone activity of DnaJ. In Salmonella paratyphi A (strain ATCC 9150 / SARB42), this protein is Chaperone modulatory protein CbpM.